The sequence spans 212 residues: Large ribosomal subunit protein bL25 (212 aa).

It belongs to the bacterial ribosomal protein bL25 family. CTC subfamily. As to quaternary structure, part of the 50S ribosomal subunit; part of the 5S rRNA/L5/L18/L25 subcomplex. Contacts the 5S rRNA. Binds to the 5S rRNA independently of L5 and L18.

This is one of the proteins that binds to the 5S RNA in the ribosome where it forms part of the central protuberance. This is Large ribosomal subunit protein bL25 from Leptospira interrogans serogroup Icterohaemorrhagiae serovar copenhageni (strain Fiocruz L1-130).